The following is a 152-amino-acid chain: SsrA-binding protein (152 aa).

It belongs to the SmpB family.

The protein resides in the cytoplasm. Required for rescue of stalled ribosomes mediated by trans-translation. Binds to transfer-messenger RNA (tmRNA), required for stable association of tmRNA with ribosomes. tmRNA and SmpB together mimic tRNA shape, replacing the anticodon stem-loop with SmpB. tmRNA is encoded by the ssrA gene; the 2 termini fold to resemble tRNA(Ala) and it encodes a 'tag peptide', a short internal open reading frame. During trans-translation Ala-aminoacylated tmRNA acts like a tRNA, entering the A-site of stalled ribosomes, displacing the stalled mRNA. The ribosome then switches to translate the ORF on the tmRNA; the nascent peptide is terminated with the 'tag peptide' encoded by the tmRNA and targeted for degradation. The ribosome is freed to recommence translation, which seems to be the essential function of trans-translation. The chain is SsrA-binding protein from Rickettsia conorii (strain ATCC VR-613 / Malish 7).